A 199-amino-acid chain; its full sequence is Peptidyl-tRNA hydrolase (199 aa).

Residue Y15 coordinates tRNA. H20 (proton acceptor) is an active-site residue. Residues Y66, N68, and N114 each coordinate tRNA.

The protein belongs to the PTH family. In terms of assembly, monomer.

It localises to the cytoplasm. It carries out the reaction an N-acyl-L-alpha-aminoacyl-tRNA + H2O = an N-acyl-L-amino acid + a tRNA + H(+). Its function is as follows. Hydrolyzes ribosome-free peptidyl-tRNAs (with 1 or more amino acids incorporated), which drop off the ribosome during protein synthesis, or as a result of ribosome stalling. Catalyzes the release of premature peptidyl moieties from peptidyl-tRNA molecules trapped in stalled 50S ribosomal subunits, and thus maintains levels of free tRNAs and 50S ribosomes. This Burkholderia cenocepacia (strain ATCC BAA-245 / DSM 16553 / LMG 16656 / NCTC 13227 / J2315 / CF5610) (Burkholderia cepacia (strain J2315)) protein is Peptidyl-tRNA hydrolase.